The following is a 359-amino-acid chain: 3-dehydroquinate synthase (359 aa).

NAD(+) is bound by residues 71–76 (DGEAHK), 105–109 (GVIGD), 129–130 (TT), Lys142, Lys151, and 169–172 (TLHT). Glu184, His247, and His264 together coordinate Zn(2+).

Belongs to the sugar phosphate cyclases superfamily. Dehydroquinate synthase family. The cofactor is NAD(+). Requires Co(2+) as cofactor. Zn(2+) serves as cofactor.

The protein resides in the cytoplasm. It carries out the reaction 7-phospho-2-dehydro-3-deoxy-D-arabino-heptonate = 3-dehydroquinate + phosphate. The protein operates within metabolic intermediate biosynthesis; chorismate biosynthesis; chorismate from D-erythrose 4-phosphate and phosphoenolpyruvate: step 2/7. Its function is as follows. Catalyzes the conversion of 3-deoxy-D-arabino-heptulosonate 7-phosphate (DAHP) to dehydroquinate (DHQ). This is 3-dehydroquinate synthase from Neisseria meningitidis serogroup A / serotype 4A (strain DSM 15465 / Z2491).